The chain runs to 141 residues: Ly6/PLAUR domain-containing protein 1 (141 aa).

Positions 1–20 are cleaved as a signal peptide; the sequence is MWVLGIAATFCGLFLLPGFA. 6 cysteine pairs are disulfide-bonded: Cys25-Cys54, Cys28-Cys37, Cys46-Cys71, Cys77-Cys100, Cys88-Cys97, and Cys101-Cys106. Residues 25-107 enclose the UPAR/Ly6 domain; it reads CYQCEEFQLN…ISCCNTPLCN (83 aa). Residue Asn45 is glycosylated (N-linked (GlcNAc...) asparagine). Ser117 carries the GPI-anchor amidated serine lipid modification. Positions 118 to 141 are cleaved as a propeptide — removed in mature form; it reads ASALRPGLRTTILFLKLALFSAHC.

As to quaternary structure, interacts with CHRNA4 and nAChRs containing alpha-4:beta-2 (CHRNA4:CHRNB2) and alpha-7 (CHRNA7) subunits.

It localises to the cell membrane. In terms of biological role, believed to act as a modulator of nicotinic acetylcholine receptors (nAChRs) activity. In vitro increases receptor desensitization and decreases affinity for ACh of alpha-4:beta-2-containing nAChRs. May play a role in the intracellular trafficking of alpha-4:beta-2 and alpha-7-containing nAChRs and may inhibit their expression at the cell surface. May be involved in the control of anxiety. In Homo sapiens (Human), this protein is Ly6/PLAUR domain-containing protein 1 (LYPD1).